The chain runs to 253 residues: Phosphate import ATP-binding protein PstB 1 (253 aa).

The region spanning 7 to 248 (LTVSDLSLYY…PEKQETSDYI (242 aa)) is the ABC transporter domain. 39 to 46 (GPSGCGKS) contributes to the ATP binding site.

It belongs to the ABC transporter superfamily. Phosphate importer (TC 3.A.1.7) family. In terms of assembly, the complex is composed of two ATP-binding proteins (PstB), two transmembrane proteins (PstC and PstA) and a solute-binding protein (PstS).

It is found in the cell membrane. It carries out the reaction phosphate(out) + ATP + H2O = ADP + 2 phosphate(in) + H(+). Functionally, part of the ABC transporter complex PstSACB involved in phosphate import. Responsible for energy coupling to the transport system. This Lactococcus lactis subsp. lactis (strain IL1403) (Streptococcus lactis) protein is Phosphate import ATP-binding protein PstB 1.